A 319-amino-acid polypeptide reads, in one-letter code: Acetyl-coenzyme A carboxylase carboxyl transferase subunit alpha (319 aa).

The CoA carboxyltransferase C-terminal domain occupies 32 to 293; sequence NVETEVRALR…KAVLLNELDA (262 aa).

The protein belongs to the AccA family. Acetyl-CoA carboxylase is a heterohexamer composed of biotin carboxyl carrier protein (AccB), biotin carboxylase (AccC) and two subunits each of ACCase subunit alpha (AccA) and ACCase subunit beta (AccD).

It is found in the cytoplasm. The catalysed reaction is N(6)-carboxybiotinyl-L-lysyl-[protein] + acetyl-CoA = N(6)-biotinyl-L-lysyl-[protein] + malonyl-CoA. The protein operates within lipid metabolism; malonyl-CoA biosynthesis; malonyl-CoA from acetyl-CoA: step 1/1. In terms of biological role, component of the acetyl coenzyme A carboxylase (ACC) complex. First, biotin carboxylase catalyzes the carboxylation of biotin on its carrier protein (BCCP) and then the CO(2) group is transferred by the carboxyltransferase to acetyl-CoA to form malonyl-CoA. This Xanthomonas oryzae pv. oryzae (strain MAFF 311018) protein is Acetyl-coenzyme A carboxylase carboxyl transferase subunit alpha.